A 435-amino-acid chain; its full sequence is Deoxybrevianamide E synthase (435 aa).

The segment at 1–28 (MTAPELRAPAGHPQEPPARSSPAQALSS) is disordered. Glu96 is a brevianamide F binding site. 8 residues coordinate dimethylallyl diphosphate: Arg110, Lys195, Tyr197, Lys265, Tyr267, Tyr354, Tyr419, and Tyr423.

This sequence belongs to the tryptophan dimethylallyltransferase family. Monomer.

It carries out the reaction brevianamide F + dimethylallyl diphosphate = deoxybrevianamide E + diphosphate. It participates in alkaloid biosynthesis. In terms of biological role, deoxybrevianamide E synthase; part of the gene cluster that mediates the biosynthesis of notoamide, a fungal indole alkaloid that belongs to a family of natural products containing a characteristic bicyclo[2.2.2]diazaoctane core. The first step of notoamide biosynthesis involves coupling of L-proline and L-tryptophan by the bimodular NRPS notE', to produce cyclo-L-tryptophan-L-proline called brevianamide F. The reverse prenyltransferase notF' then acts as a deoxybrevianamide E synthase and converts brevianamide F to deoxybrevianamide E via reverse prenylation at C-2 of the indole ring leading to the bicyclo[2.2.2]diazaoctane core. Deoxybrevianamide E is further hydroxylated at C-6 of the indole ring, likely catalyzed by the cytochrome P450 monooxygenase notG', to yield 6-hydroxy-deoxybrevianamide E. 6-hydroxy-deoxybrevianamide E is a specific substrate of the prenyltransferase notC' for normal prenylation at C-7 to produce 6-hydroxy-7-prenyl-deoxybrevianamide, also called notoamide S. As the proposed pivotal branching point in notoamide biosynthesis, notoamide S can be diverted to notoamide E through an oxidative pyran ring closure putatively catalyzed by either notH' cytochrome P450 monooxygenase or the notD' FAD-linked oxidoreductase. This step would be followed by an indole 2,3-epoxidation-initiated pinacol-like rearrangement catalyzed by the notB' FAD-dependent monooxygenase leading to the formation of notoamide C and notoamide D. On the other hand notoamide S is converted to notoamide T by notH' (or notD'), a bifunctional oxidase that also functions as the intramolecular Diels-Alderase responsible for generation of (-)-notoamide T. To generate antipodal (+)-notoaminide T, notH (or notD) in Aspergillus strain MF297-2 is expected to catalyze a Diels-Alder reaction leading to the opposite stereochemistry. The remaining oxidoreductase notD' (or notH') likely catalyzes the oxidative pyran ring formation to yield (-)-stephacidin A. The FAD-dependent monooxygenase notI' is highly similar to notB' and is predicted to catalyze a similar conversion from (-)-stephacidin A to (+)-notoamide B via the 2,3-epoxidation of (-)-stephacidin A followed by a pinacol-type rearrangement. Finally, it remains unclear which enzyme could be responsible for the final hydroxylation steps leading to notoamide A and sclerotiamide. This is Deoxybrevianamide E synthase from Aspergillus versicolor.